The sequence spans 265 residues: Ubiquinone biosynthesis protein COQ4 homolog, mitochondrial (265 aa).

Positions 162, 163, 166, and 178 each coordinate Zn(2+).

The protein belongs to the COQ4 family. As to quaternary structure, component of a multi-subunit COQ enzyme complex. It depends on Zn(2+) as a cofactor.

It localises to the mitochondrion inner membrane. The catalysed reaction is a 4-hydroxy-3-methoxy-5-(all-trans-polyprenyl)benzoate + H(+) = a 2-methoxy-6-(all-trans-polyprenyl)phenol + CO2. The protein operates within cofactor biosynthesis; ubiquinone biosynthesis. Lyase that catalyzes the C1-decarboxylation of 4-hydroxy-3-methoxy-5-(all-trans-polyprenyl)benzoic acid into 2-methoxy-6-(all-trans-polyprenyl)phenol during ubiquinone biosynthesis. In Drosophila willistoni (Fruit fly), this protein is Ubiquinone biosynthesis protein COQ4 homolog, mitochondrial.